The sequence spans 577 residues: E3 ubiquitin-protein ligase MSL2 (577 aa).

The tract at residues 1–116 (MNPVNATALY…CEYITQTTLA (116 aa)) is sufficient for interaction with MSL1. Residues Cys-44, Cys-47, Cys-62, His-64, Cys-67, Cys-70, Cys-81, and Cys-84 each contribute to the Zn(2+) site. The RING-type zinc finger occupies 44 to 85 (CCVCGHLLQDPIAPTNSTCQHYVCKTCKGKKMMMKPSCSWCK). A Glycyl lysine isopeptide (Lys-Gly) (interchain with G-Cter in SUMO2) cross-link involves residue Lys-375. A disordered region spans residues 405-428 (TKSMKKSHEHGSKKSHSKSKPGIL). A compositionally biased stretch (basic residues) spans 407-423 (SMKKSHEHGSKKSHSKS). A Phosphoserine modification is found at Ser-447. Residues 457–508 (QEKKGCKCGRATQNPSVLTCRGQRCPCYSNRKACLDCICRGCQNSYMANGEK) enclose the CXC MSL2-type domain. Zn(2+) is bound by residues Cys-462, Cys-464, Cys-476, Cys-481, Cys-483, Cys-490, Cys-493, Cys-495, and Cys-498.

It belongs to the MSL2 family. As to quaternary structure, component of a multisubunit histone acetyltransferase complex (MSL) at least composed of the KAT8/MOF/MYST1, MSL1/hampin, MSL2 and MSL3. Forms a MSL heterotetrameric core with MSL1.

The protein localises to the nucleus. It localises to the chromosome. It catalyses the reaction S-ubiquitinyl-[E2 ubiquitin-conjugating enzyme]-L-cysteine + [acceptor protein]-L-lysine = [E2 ubiquitin-conjugating enzyme]-L-cysteine + N(6)-ubiquitinyl-[acceptor protein]-L-lysine.. The protein operates within protein modification; protein ubiquitination. Its function is as follows. Non-catalytic component of the MSL histone acetyltransferase complex, a multiprotein complex that mediates the majority of histone H4 acetylation at 'Lys-16' (H4K16ac), an epigenetic mark that prevents chromatin compaction. The MSL complex is required for chromosome stability and genome integrity by maintaining homeostatic levels of H4K16ac. The MSL complex is also involved in gene dosage by promoting up-regulation of genes expressed by the X chromosome. X up-regulation is required to compensate for autosomal biallelic expression. The MSL complex also participates in gene dosage compensation by promoting expression of Tsix non-coding RNA. MSL2 plays a key role in gene dosage by ensuring biallelic expression of a subset of dosage-sensitive genes, including many haploinsufficient genes. Acts by promoting promoter-enhancer contacts, thereby preventing DNA methylation of one allele and creating a methylation-free environment for methylation-sensitive transcription factors such as SP1, KANSL1 and KANSL3. Also acts as an E3 ubiquitin ligase that promotes monoubiquitination of histone H2B at 'Lys-35' (H2BK34Ub), but not that of H2A. This activity is greatly enhanced by heterodimerization with MSL1. H2B ubiquitination in turn stimulates histone H3 methylation at 'Lys-4' (H3K4me) and 'Lys-79' (H3K79me) and leads to gene activation, including that of HOXA9 and MEIS1. The sequence is that of E3 ubiquitin-protein ligase MSL2 from Mus musculus (Mouse).